The chain runs to 315 residues: 4-hydroxy-3-methylbut-2-enyl diphosphate reductase (315 aa).

C12 is a binding site for [4Fe-4S] cluster. Residues H43 and H81 each coordinate (2E)-4-hydroxy-3-methylbut-2-enyl diphosphate. Dimethylallyl diphosphate contacts are provided by H43 and H81. Isopentenyl diphosphate-binding residues include H43 and H81. C103 contacts [4Fe-4S] cluster. A (2E)-4-hydroxy-3-methylbut-2-enyl diphosphate-binding site is contributed by H131. A dimethylallyl diphosphate-binding site is contributed by H131. H131 contributes to the isopentenyl diphosphate binding site. Catalysis depends on E133, which acts as the Proton donor. Position 170 (T170) interacts with (2E)-4-hydroxy-3-methylbut-2-enyl diphosphate. C198 lines the [4Fe-4S] cluster pocket. Residues S226, N228, and S271 each contribute to the (2E)-4-hydroxy-3-methylbut-2-enyl diphosphate site. Dimethylallyl diphosphate-binding residues include S226, N228, and S271. Isopentenyl diphosphate contacts are provided by S226, N228, and S271.

The protein belongs to the IspH family. It depends on [4Fe-4S] cluster as a cofactor.

The catalysed reaction is isopentenyl diphosphate + 2 oxidized [2Fe-2S]-[ferredoxin] + H2O = (2E)-4-hydroxy-3-methylbut-2-enyl diphosphate + 2 reduced [2Fe-2S]-[ferredoxin] + 2 H(+). It carries out the reaction dimethylallyl diphosphate + 2 oxidized [2Fe-2S]-[ferredoxin] + H2O = (2E)-4-hydroxy-3-methylbut-2-enyl diphosphate + 2 reduced [2Fe-2S]-[ferredoxin] + 2 H(+). Its pathway is isoprenoid biosynthesis; dimethylallyl diphosphate biosynthesis; dimethylallyl diphosphate from (2E)-4-hydroxy-3-methylbutenyl diphosphate: step 1/1. The protein operates within isoprenoid biosynthesis; isopentenyl diphosphate biosynthesis via DXP pathway; isopentenyl diphosphate from 1-deoxy-D-xylulose 5-phosphate: step 6/6. Functionally, catalyzes the conversion of 1-hydroxy-2-methyl-2-(E)-butenyl 4-diphosphate (HMBPP) into a mixture of isopentenyl diphosphate (IPP) and dimethylallyl diphosphate (DMAPP). Acts in the terminal step of the DOXP/MEP pathway for isoprenoid precursor biosynthesis. This is 4-hydroxy-3-methylbut-2-enyl diphosphate reductase from Bacillus cytotoxicus (strain DSM 22905 / CIP 110041 / 391-98 / NVH 391-98).